We begin with the raw amino-acid sequence, 330 residues long: tRNA U34 carboxymethyltransferase (330 aa).

Carboxy-S-adenosyl-L-methionine-binding positions include K91, W105, K110, G130, 152–154, 181–182, M196, Y200, and R315; these read DPS and IE.

The protein belongs to the class I-like SAM-binding methyltransferase superfamily. CmoB family. As to quaternary structure, homotetramer.

The catalysed reaction is carboxy-S-adenosyl-L-methionine + 5-hydroxyuridine(34) in tRNA = 5-carboxymethoxyuridine(34) in tRNA + S-adenosyl-L-homocysteine + H(+). Functionally, catalyzes carboxymethyl transfer from carboxy-S-adenosyl-L-methionine (Cx-SAM) to 5-hydroxyuridine (ho5U) to form 5-carboxymethoxyuridine (cmo5U) at position 34 in tRNAs. The sequence is that of tRNA U34 carboxymethyltransferase from Shewanella frigidimarina (strain NCIMB 400).